We begin with the raw amino-acid sequence, 380 residues long: Alcohol dehydrogenase 1 (380 aa).

Residues Cys48, Thr50, His70, Cys100, Cys103, Cys106, Cys114, and Cys178 each contribute to the Zn(2+) site. Residues Thr50 and His70 each coordinate an alcohol. Thr50 serves as a coordination point for NAD(+). Residues 203 to 208 (GLGAVG), Asp227, Arg232, Thr273, Val296, 296 to 298 (VGV), and Arg373 contribute to the NAD(+) site.

This sequence belongs to the zinc-containing alcohol dehydrogenase family. In terms of assembly, homodimer. Zn(2+) serves as cofactor.

It is found in the cytoplasm. It carries out the reaction a primary alcohol + NAD(+) = an aldehyde + NADH + H(+). It catalyses the reaction a secondary alcohol + NAD(+) = a ketone + NADH + H(+). The polypeptide is Alcohol dehydrogenase 1 (ADH1) (Trifolium repens (Creeping white clover)).